The chain runs to 288 residues: Octanoyl-[GcvH]:protein N-octanoyltransferase (288 aa).

The 210-residue stretch at 44-253 (AGGPPTFRLW…VLESAMGPQV (210 aa)) folds into the BPL/LPL catalytic domain. Catalysis depends on Cys148, which acts as the Acyl-thioester intermediate. The interval 269–288 (GREGASETDPRRVAYGVDRP) is disordered. The span at 272–288 (GASETDPRRVAYGVDRP) shows a compositional bias: basic and acidic residues.

The protein belongs to the octanoyltransferase LipL family.

The catalysed reaction is N(6)-octanoyl-L-lysyl-[glycine-cleavage complex H protein] + L-lysyl-[lipoyl-carrier protein] = N(6)-octanoyl-L-lysyl-[lipoyl-carrier protein] + L-lysyl-[glycine-cleavage complex H protein]. It functions in the pathway protein modification; protein lipoylation via endogenous pathway; protein N(6)-(lipoyl)lysine from octanoyl-[acyl-carrier-protein]. In terms of biological role, catalyzes the amidotransfer (transamidation) of the octanoyl moiety from octanoyl-GcvH to the lipoyl domain of the E2 subunit of lipoate-dependent enzymes. In Kyrpidia tusciae (strain DSM 2912 / NBRC 15312 / T2) (Bacillus tusciae), this protein is Octanoyl-[GcvH]:protein N-octanoyltransferase.